The primary structure comprises 344 residues: MHYLMKLFFSLSLFFGINGAVGSNQPSQANKNPKLFVFGNSYADTGNMKPTALSWKLPYGITFPGKPSGRYSDGLTATDFLAKQLGAKLPYLWRTHGKKKVKLNRGMNFAFGGSEVFDSPVDRSPNISTQVGFLVNLALARRVYTIDGDLASSYALLSYSGTDYYGFIDQNPNMAAYPAFVEFIVEDIQYSLGIMNGLKFKNIAVTSLHPLGCLPRVTVASSFRSCNESYSDLVRLHNESLKKAVAKLNKEDKFRTKGDRFVIVDLHKAFMTILEKKGNKRFKSPLKPCCEGDCARMDMKGAKKYTLCNDPKSAFFWDEINPTQEGWRSIYSLLGKSLTESLTK.

An N-terminal signal peptide occupies residues 1–19 (MHYLMKLFFSLSLFFGING). Catalysis depends on Ser-41, which acts as the Nucleophile. N-linked (GlcNAc...) asparagine glycosylation is found at Asn-126, Asn-227, and Asn-238. Asp-318 is a catalytic residue.

The protein belongs to the 'GDSL' lipolytic enzyme family.

It localises to the secreted. The polypeptide is GDSL esterase/lipase At5g03590 (Arabidopsis thaliana (Mouse-ear cress)).